The primary structure comprises 831 residues: Zinc transporter ZIP10 (831 aa).

A signal peptide spans 1-25 (MKVHMHTKFCLICLLTFIFHHCNHC). The disordered stretch occupies residues 126–318 (HNHQHSHNHL…RKREAPHVKN (193 aa)). Residues 138-147 (ENQTVTSVST) are compositionally biased toward polar residues. The N-linked (GlcNAc...) asparagine glycan is linked to Asn139. Positions 152–171 (KCDPEKETVEVSVKSDDKHM) are enriched in basic and acidic residues. A compositionally biased stretch (basic residues) spans 172 to 188 (HDHNHRLRHHHRLHHHL). Residues 189-198 (DHNNTHHFHN) are compositionally biased toward basic and acidic residues. N-linked (GlcNAc...) asparagine glycosylation is found at Asn198 and Asn218. The segment covering 211–221 (NEPSTETNKTQ) has biased composition (polar residues). Residues 229 to 238 (PKGKRKKKGR) show a composition bias toward basic residues. Composition is skewed to basic and acidic residues over residues 256–273 (DQGE…DRVH) and 281–315 (HLPE…EAPH). Asn339 is a glycosylation site (N-linked (GlcNAc...) asparagine). Transmembrane regions (helical) follow at residues 411 to 431 (IISI…VPII) and 438 to 458 (FLLT…ALLH). Residues 464–484 (QGGHDHSHQHAHGHGHSHGHE) are disordered. A helical membrane pass occupies residues 495-515 (VLKGLVALGGIYLLFIIEHCI). Residues Thr536 and Thr553 each carry the phosphothreonine modification. Ser591 carries the post-translational modification Phosphoserine. The next 4 helical transmembrane spans lie at 687–707 (AIGA…IAVF), 732–752 (IVYN…GTAV), 759–779 (ITLW…LVDM), and 801–821 (FILQ…IALY).

Belongs to the ZIP transporter (TC 2.A.5) family. Interacts with SLC39A6; which triggers cells to undergo EMT and mitosis. Found in a complex with SLC39A6, SLC39A10 and with the 'Ser-727' phosphorylated form of STAT3 throughout mitosis. Found in a complex with SLC39A6, SLC39A10 and with NCAM1; this complex controls NCAM1 phosphorylation and integration into focal adhesion complexes during epithelial-tomesenchymal transition. Found in a complex with SLC39A6, SLC39A10 and with GSK3B that controls NCAM1 phosphorylation. In terms of processing, undergoes N-terminal ectodomain shedding.

The protein localises to the cell membrane. Its subcellular location is the apical cell membrane. The catalysed reaction is Zn(2+)(in) = Zn(2+)(out). Its function is as follows. Zinc-influx transporter. When associated with SLC39A6, the heterodimer formed by SLC39A10 and SLC39A6 mediates cellular zinc uptake to trigger cells to undergo epithelial-to-mesenchymal transition (EMT). SLC39A10-SLC39A6 heterodimers play also an essentiel role in initiating mitosis by importing zinc into cells to initiate a pathway resulting in the onset of mitosis. Plays an important for both mature B-cell maintenance and humoral immune responses. When associated with SLC39A10, the heterodimer controls NCAM1 phosphorylation and integration into focal adhesion complexes during EMT. This chain is Zinc transporter ZIP10, found in Homo sapiens (Human).